Consider the following 160-residue polypeptide: 2-C-methyl-D-erythritol 2,4-cyclodiphosphate synthase (160 aa).

Residues Asp11 and His13 each coordinate a divalent metal cation. Residues 11–13 (DVH) and 37–38 (HS) each bind 4-CDP-2-C-methyl-D-erythritol 2-phosphate. His45 is a binding site for a divalent metal cation. 4-CDP-2-C-methyl-D-erythritol 2-phosphate-binding positions include 59 to 61 (DIG) and Arg145.

It belongs to the IspF family. In terms of assembly, homotrimer. It depends on a divalent metal cation as a cofactor.

The enzyme catalyses 4-CDP-2-C-methyl-D-erythritol 2-phosphate = 2-C-methyl-D-erythritol 2,4-cyclic diphosphate + CMP. The protein operates within isoprenoid biosynthesis; isopentenyl diphosphate biosynthesis via DXP pathway; isopentenyl diphosphate from 1-deoxy-D-xylulose 5-phosphate: step 4/6. In terms of biological role, involved in the biosynthesis of isopentenyl diphosphate (IPP) and dimethylallyl diphosphate (DMAPP), two major building blocks of isoprenoid compounds. Catalyzes the conversion of 4-diphosphocytidyl-2-C-methyl-D-erythritol 2-phosphate (CDP-ME2P) to 2-C-methyl-D-erythritol 2,4-cyclodiphosphate (ME-CPP) with a corresponding release of cytidine 5-monophosphate (CMP). The polypeptide is 2-C-methyl-D-erythritol 2,4-cyclodiphosphate synthase (Neisseria meningitidis serogroup A / serotype 4A (strain DSM 15465 / Z2491)).